Here is a 577-residue protein sequence, read N- to C-terminus: Urease subunit alpha (577 aa).

The Urease domain maps to 136–577 (GAIDCHVHLI…LPMAQRYFLF (442 aa)). The Ni(2+) site is built by His141, His143, and Lys224. Position 224 is an N6-carboxylysine (Lys224). His226 contributes to the substrate binding site. Residues His253 and His279 each coordinate Ni(2+). His327 (proton donor) is an active-site residue. Asp367 provides a ligand contact to Ni(2+).

Belongs to the metallo-dependent hydrolases superfamily. Urease alpha subunit family. As to quaternary structure, heterotrimer of UreA (gamma), UreB (beta) and UreC (alpha) subunits. Three heterotrimers associate to form the active enzyme. Ni cation serves as cofactor. Carboxylation allows a single lysine to coordinate two nickel ions.

It is found in the cytoplasm. The enzyme catalyses urea + 2 H2O + H(+) = hydrogencarbonate + 2 NH4(+). It participates in nitrogen metabolism; urea degradation; CO(2) and NH(3) from urea (urease route): step 1/1. In Mycobacterium marinum (strain ATCC BAA-535 / M), this protein is Urease subunit alpha.